The primary structure comprises 309 residues: Aurora kinase C (309 aa).

The tract at residues 1–33 (MSSPRAVVQLGKAQPAGEELATANQTAQQPSSP) is disordered. Residues 22–32 (TANQTAQQPSS) are compositionally biased toward polar residues. One can recognise a Protein kinase domain in the interval 43–293 (FEIGRPLGKG…LAQILKHPWV (251 aa)). ATP is bound by residues 49–57 (LGKGKFGNV) and Lys72. Asp166 acts as the Proton acceptor in catalysis. Residue Thr198 is modified to Phosphothreonine; by PKA. The tract at residues 292-309 (WVQAHSRRVLPPCAQMAS) is interaction with BIRC5.

This sequence belongs to the protein kinase superfamily. Ser/Thr protein kinase family. Aurora subfamily. In terms of assembly, component of the chromosomal passenger complex (CPC) composed of at least BIRC5/survivin, CDCA8/borealin, INCENP, AURKB or AURKC; predominantly independent AURKB- and AURKC-containing complexes exist; in the complex interacts directly with BIRC5/survivin and INCENP. Interacts with TACC1. As to expression, isoform 1 and isoform 2 are expressed in testis. Elevated expression levels were seen only in a subset of cancer cell lines such as Hep-G2, Huh-7 and HeLa. Expression is maximum at M phase.

It localises to the nucleus. It is found in the chromosome. Its subcellular location is the centromere. The protein localises to the cytoplasm. The protein resides in the cytoskeleton. It localises to the spindle. The enzyme catalyses L-seryl-[protein] + ATP = O-phospho-L-seryl-[protein] + ADP + H(+). The catalysed reaction is L-threonyl-[protein] + ATP = O-phospho-L-threonyl-[protein] + ADP + H(+). With respect to regulation, okadaic acid, an inhibitor of protein phosphatase 1 (PP1), protein phosphatase 2A (PP2A) and protein phosphatase 5 (PP5), increases AURKC activity. AURKC is also stabilized through its interaction with INCENP, which also acts as an activator. Its function is as follows. Serine/threonine-protein kinase component of the chromosomal passenger complex (CPC), a complex that acts as a key regulator of mitosis. The CPC complex has essential functions at the centromere in ensuring correct chromosome alignment and segregation and is required for chromatin-induced microtubule stabilization and spindle assembly. Also plays a role in meiosis and more particularly in spermatogenesis. Has redundant cellular functions with AURKB and can rescue an AURKB knockdown. Like AURKB, AURKC phosphorylates histone H3 at 'Ser-10' and 'Ser-28'. AURKC phosphorylates the CPC complex subunits BIRC5/survivin and INCENP leading to increased AURKC activity. Phosphorylates TACC1, another protein involved in cell division, at 'Ser-228'. In Homo sapiens (Human), this protein is Aurora kinase C (AURKC).